We begin with the raw amino-acid sequence, 177 residues long: ATP synthase subunit delta (177 aa).

The protein belongs to the ATPase delta chain family. As to quaternary structure, F-type ATPases have 2 components, F(1) - the catalytic core - and F(0) - the membrane proton channel. F(1) has five subunits: alpha(3), beta(3), gamma(1), delta(1), epsilon(1). F(0) has three main subunits: a(1), b(2) and c(10-14). The alpha and beta chains form an alternating ring which encloses part of the gamma chain. F(1) is attached to F(0) by a central stalk formed by the gamma and epsilon chains, while a peripheral stalk is formed by the delta and b chains.

The protein localises to the cell inner membrane. In terms of biological role, f(1)F(0) ATP synthase produces ATP from ADP in the presence of a proton or sodium gradient. F-type ATPases consist of two structural domains, F(1) containing the extramembraneous catalytic core and F(0) containing the membrane proton channel, linked together by a central stalk and a peripheral stalk. During catalysis, ATP synthesis in the catalytic domain of F(1) is coupled via a rotary mechanism of the central stalk subunits to proton translocation. Its function is as follows. This protein is part of the stalk that links CF(0) to CF(1). It either transmits conformational changes from CF(0) to CF(1) or is implicated in proton conduction. The polypeptide is ATP synthase subunit delta (Enterobacter sp. (strain 638)).